The primary structure comprises 533 residues: Peptidyl-prolyl cis-trans isomerase-like 2 (533 aa).

In terms of domain architecture, U-box spans 38–111; the sequence is KRLPFYCCSL…DEYFCPVTYK (74 aa). The PPIase cyclophilin-type domain maps to 284–438; sequence KKSYARIITN…REIKIKQIQM (155 aa). The stretch at 443–519 forms a coiled coil; it reads FEEYQRRLKN…SNEGEELQKK (77 aa). Over residues 454–477 the composition is skewed to basic and acidic residues; that stretch reads LTHEANAERENEEMRKRREKEEKM. Positions 454 to 533 are disordered; it reads LTHEANAERE…KTTFGNFDNF (80 aa). Residues 523 to 533 show a composition bias toward polar residues; sequence TKTTFGNFDNF.

This sequence belongs to the cyclophilin-type PPIase family. PPIL2 subfamily.

The protein localises to the nucleus. It carries out the reaction [protein]-peptidylproline (omega=180) = [protein]-peptidylproline (omega=0). It catalyses the reaction S-ubiquitinyl-[E2 ubiquitin-conjugating enzyme]-L-cysteine + [acceptor protein]-L-lysine = [E2 ubiquitin-conjugating enzyme]-L-cysteine + N(6)-ubiquitinyl-[acceptor protein]-L-lysine.. It participates in protein modification; protein ubiquitination. May catalyze the cis-trans isomerization of proline imidic peptide bonds in oligopeptides thereby assisting the folding of proteins. May also function as a chaperone, playing a role in intracellular transport of proteins. May also have a protein ubiquitin ligase activity acting as an E3 ubiquitin protein ligase or as a ubiquitin-ubiquitin ligase promoting elongation of ubiquitin chains on proteins. The sequence is that of Peptidyl-prolyl cis-trans isomerase-like 2 (cyp14) from Rhizopus delemar (strain RA 99-880 / ATCC MYA-4621 / FGSC 9543 / NRRL 43880) (Mucormycosis agent).